A 4328-amino-acid chain; its full sequence is Cadherin-4 (4328 aa).

Positions 1–23 (MKKHRVFHLFLLIFCKAISLVTT) are cleaved as a signal peptide. The Extracellular portion of the chain corresponds to 24–4072 (SSSTEQIFEF…TVLEFLLKAE (4049 aa)). N39 and N56 each carry an N-linked (GlcNAc...) asparagine glycan. Cadherin domains lie at 108–153 (PLNR…SPVF) and 156–275 (GEQG…NPNI). Residues N196, N330, N339, N365, N431, N452, and N584 are each glycosylated (N-linked (GlcNAc...) asparagine). 11 Cadherin domains span residues 384–492 (DNEK…APVF), 507–608 (PGDV…SPVF), 609–720 (SSFP…SPQF), 721–826 (DEVS…PPKC), 827–934 (VVQH…AIEF), 935–1051 (DDVA…KPMY), 1047–1156 (KKPM…SPTF), 1175–1262 (RIFA…PPEI), 1265–1363 (KKSD…RPKF), 1364–1467 (SASH…SPYF), and 1476–1570 (VDES…APET). N811 and N899 each carry an N-linked (GlcNAc...) asparagine glycan. Residues 1090-1092 (RGD) carry the Cell attachment site motif. N-linked (GlcNAc...) asparagine glycosylation is present at N1192. The disordered stretch occupies residues 1246–1267 (NSAGQKPRKSKNSPPEISGKKS). An N-linked (GlcNAc...) asparagine glycan is attached at N1335. N-linked (GlcNAc...) asparagine glycosylation occurs at N1610. A Cadherin 14 domain is found at 1671–1784 (RRQVYRGTIR…IDENDEPPRF (114 aa)). N1895 carries an N-linked (GlcNAc...) asparagine glycan. In terms of domain architecture, Cadherin 15 spans 1917–1984 (FSIVNPHEAF…ENINDETPIF (68 aa)). N2059, N2150, N2216, N2367, N2413, N2440, and N2535 each carry an N-linked (GlcNAc...) asparagine glycan. 2 Cadherin domains span residues 2187–2285 (EKLK…MPEF) and 2286–2397 (IRSD…PPRF). Cadherin domains lie at 2429–2505 (LQFS…PPFF), 2506–2608 (VLPF…VPRF), 2609–2712 (SNSH…APAF), 2719–2813 (FTIS…PPQF), 2828–2915 (SPIL…CPEA), 2913–3011 (PEAN…RPKI), 3012–3113 (IEKL…APTF), 3114–3216 (EKST…APKF), and 3217–3326 (EKEK…APTF). Residues N2844, N2916, N2941, N3083, and N3143 are each glycosylated (N-linked (GlcNAc...) asparagine). N-linked (GlcNAc...) asparagine glycosylation is present at N3330. 2 consecutive Cadherin domains span residues 3335–3428 (VQEG…APTM) and 3429–3554 (KPMK…VDEF). An N-linked (GlcNAc...) asparagine glycan is attached at N3512. The 39-residue stretch at 3706-3744 (ETNQCAKSPCEQWQLCIPSVHNSTYECVCPLGMEGDKCS) folds into the EGF-like 1 domain. 10 disulfides stabilise this stretch: C3710–C3721, C3715–C3732, C3734–C3743, C3898–C3925, C3933–C3944, C3938–C3954, C3956–C3965, C3972–C3983, C3977–C3992, and C3994–C4003. N-linked (GlcNAc...) asparagine glycosylation is present at N3727. Positions 3757–3925 (EAELSVGGDG…MKLFGAQPGC (169 aa)) constitute a Laminin G-like domain. 2 EGF-like domains span residues 3929 to 3966 (TSSPCNDLPCQHAGTCISQGKSHFKCECPSRYSGNVCE) and 3968 to 4004 (DLEPCASSPCPTGIQCIPFYNDYLCKCPNGFTGKHCE). N4043 carries an N-linked (GlcNAc...) asparagine glycan. Residues 4073 to 4093 (IVIVILGVLLLLLVFCLTFIT) form a helical membrane-spanning segment. The Cytoplasmic portion of the chain corresponds to 4094-4328 (WKCCKKNRDP…IDEEVNIHIS (235 aa)). 2 disordered regions span residues 4143–4215 (TSSV…SSLR) and 4268–4311 (NFER…PISL). Basic and acidic residues predominate over residues 4178 to 4196 (TRRDPLPSDKFRRVDETAN). The Cell attachment site signature appears at 4207–4209 (RGD).

In larvae and adult, it is expressed in various tissues including pharyngeal muscle, hypodermis and gonad. In the nervous system it is expressed in sensory neurons and motor neurons in the ventral cord.

It is found in the cell membrane. Its function is as follows. Potential calcium-dependent cell-adhesion protein that controls axon guidance in the ventral cord. The sequence is that of Cadherin-4 from Caenorhabditis elegans.